Reading from the N-terminus, the 250-residue chain is Proteasome subunit alpha type-4 (250 aa).

It belongs to the peptidase T1A family. As to quaternary structure, the 26S proteasome consists of a 20S proteasome core and two 19S regulatory subunits. The 20S proteasome core is composed of 28 subunits that are arranged in four stacked rings, resulting in a barrel-shaped structure. The two end rings are each formed by seven alpha subunits, and the two central rings are each formed by seven beta subunits. The catalytic chamber with the active sites is on the inside of the barrel.

It localises to the cytoplasm. Its subcellular location is the nucleus. In terms of biological role, the proteasome is a multicatalytic proteinase complex which is characterized by its ability to cleave peptides with Arg, Phe, Tyr, Leu, and Glu adjacent to the leaving group at neutral or slightly basic pH. The proteasome has an ATP-dependent proteolytic activity. This Dictyostelium discoideum (Social amoeba) protein is Proteasome subunit alpha type-4 (psmA4).